Reading from the N-terminus, the 488-residue chain is Eukaryotic translation initiation factor 3 subunit L (488 aa).

Disordered stretches follow at residues 1-34 (MSLPQHQNRDAARRAPDDDDDAEEETMANDYREQ) and 427-449 (SEGGLLERRGDPQQRSRLRHGKE). Residues 7 to 16 (QNRDAARRAP) are compositionally biased toward basic and acidic residues. Acidic residues predominate over residues 17 to 27 (DDDDDAEEETM). A PCI domain is found at 256–450 (DAIRMFSHIL…RSRLRHGKEI (195 aa)). The span at 431-440 (LLERRGDPQQ) shows a compositional bias: basic and acidic residues.

The protein belongs to the eIF-3 subunit L family. Component of the eukaryotic translation initiation factor 3 (eIF-3) complex.

The protein resides in the cytoplasm. Its function is as follows. Component of the eukaryotic translation initiation factor 3 (eIF-3) complex, which is involved in protein synthesis of a specialized repertoire of mRNAs and, together with other initiation factors, stimulates binding of mRNA and methionyl-tRNAi to the 40S ribosome. The eIF-3 complex specifically targets and initiates translation of a subset of mRNAs involved in cell proliferation. In Phaeosphaeria nodorum (strain SN15 / ATCC MYA-4574 / FGSC 10173) (Glume blotch fungus), this protein is Eukaryotic translation initiation factor 3 subunit L.